The sequence spans 1050 residues: Ankyrin repeat domain-containing protein 27 (1050 aa).

Residues 1–372 (MALYDEDLLK…RQGSLSAKPP (372 aa)) form a sufficient for GEF activity towards RAB21 region. A VPS9 domain is found at 233 to 371 (ASEDAAFNKI…IRQGSLSAKP (139 aa)). ANK repeat units lie at residues 396-426 (SPTD…DKDT), 462-491 (RGHT…MVNA), 495-524 (HGAT…SAEV), 528-560 (NGNT…RLDI), 564-593 (KGDT…STEI), and 597-627 (LKET…RQKS). Positions 396 to 460 (SPTDCLFKHI…PSVVTPFSRD (65 aa)) are sufficient for interaction with VPS29. The tract at residues 451 to 600 (PSVVTPFSRD…TEIQNRLKET (150 aa)) is interaction with RAB38. The interval 451-730 (PSVVTPFSRD…APAQKRLAKV (280 aa)) is interaction with RAB32. Residues 625-665 (QKSSEAPVQSPQRSVDSISQESSTSSFSSMSASSRQEETKK) form a disordered region. Residues 628–637 (SEAPVQSPQR) are compositionally biased toward polar residues. The span at 638–658 (SVDSISQESSTSSFSSMSASS) shows a compositional bias: low complexity. Residues 658–707 (SRQEETKKDYREVEKLLRAVADGDLEMVRYLLEWTEEDLEDAEDTVSAAD) form a required for interaction with VAMP7 region. ANK repeat units follow at residues 668–698 (REVE…DLED), 743–772 (DGSS…NAGA), 776–805 (DQAV…KPNK), 809–838 (SGNT…SINA), and 842–871 (KGNT…SVQV). Residues 692–746 (TEEDLEDAEDTVSAADPEFCHPLCQCPKCAPAQKRLAKVPASGLGVNVTSQDGSS) are sufficient for interaction with VPS29. A phosphoserine mark is found at S962 and S970. Residues 987-1050 (PAQSGSHAAE…TPQEVSASRS (64 aa)) form a disordered region. Residues 994 to 1004 (AAEKGNSDWPE) are compositionally biased toward basic and acidic residues. T1023 carries the phosphothreonine modification. Residues 1040 to 1050 (STPQEVSASRS) are compositionally biased toward polar residues.

Interacts with RAB21 (GDP-bound form), VPS29, RAB32 (GTP-bound form), RAB38 (GTP-bound form), VAMP7, KIF5A, KIF5C, GOLGA4. Interacts with low affinity with RAB5. ANKRD27:RAB32 heterodimers can homodimerize to form tetramers. Can interact with RAB38 or RAB32, VPS29 and VAMP7 simultaneously. A decreased interaction with RAB32 seen in the presence of SGSM2.

The protein resides in the early endosome. It is found in the late endosome. Its subcellular location is the cytoplasmic vesicle membrane. The protein localises to the lysosome. It localises to the cell membrane. The protein resides in the melanosome. May be a guanine exchange factor (GEF) for Rab21, Rab32 and Rab38 and regulate endosome dynamics. May regulate the participation of VAMP7 in membrane fusion events; in vitro inhibits VAMP7-mediated SNARE complex formation by trapping VAMP7 in a closed, fusogenically inactive conformation. Involved in peripheral melanosomal distribution of TYRP1 in melanocytes; the function, which probably is implicating vesicle-trafficking, includes cooperation with Rab32, Rab38 and VAMP7. Involved in the regulation of neurite growth; the function seems to require its GEF activity, probably towards Rab21, and VAMP7 but not Rab32/38. Proposed to be involved in Golgi sorting of VAMP7 and transport of VAMP7 vesicles to the cell surface; the function seems to implicate kinesin heavy chain isoform 5 proteins, GOLGA4, RAB21 and MACF1. Required for the colocalization of VAMP7 and Rab21, probably on TGN sites. Involved in GLUT1 endosome-to-plasma membrane trafficking; the function is dependent of association with VPS29. Regulates the proper trafficking of melanogenic enzymes TYR, TYRP1 and DCT/TYRP2 to melanosomes in melanocytes. The polypeptide is Ankyrin repeat domain-containing protein 27 (ANKRD27) (Homo sapiens (Human)).